The following is a 509-amino-acid chain: tRNA (guanine(37)-N(1))-methyltransferase (509 aa).

A mitochondrion-targeting transit peptide spans M1 to F57. Residues H289, D327–L328, D355–G356, and N387 contribute to the S-adenosyl-L-methionine site. A disordered region spans residues T478–T509.

The protein belongs to the class I-like SAM-binding methyltransferase superfamily. TRM5/TYW2 family. Monomer.

Its subcellular location is the mitochondrion matrix. The protein resides in the nucleus. The protein localises to the cytoplasm. The enzyme catalyses guanosine(37) in tRNA + S-adenosyl-L-methionine = N(1)-methylguanosine(37) in tRNA + S-adenosyl-L-homocysteine + H(+). Its function is as follows. Involved in mitochondrial tRNA methylation. Specifically methylates the N1 position of guanosine-37 in various tRNAs. Methylation is not dependent on the nature of the nucleoside 5' of the target nucleoside. This is the first step in the biosynthesis of wybutosine (yW), a modified base adjacent to the anticodon of tRNAs and required for accurate decoding. In Macaca fascicularis (Crab-eating macaque), this protein is tRNA (guanine(37)-N(1))-methyltransferase.